The primary structure comprises 277 residues: Isoprenyl transferase 1 (277 aa).

Residues 1–30 (MAVRGILGRQRREYRTPEPHPSGARPPKLG) are disordered. D42 is a catalytic residue. D42 is a Mg(2+) binding site. Residues 43–46 (GNGR), W47, R55, H59, and 87–89 (STE) contribute to the substrate site. N90 acts as the Proton acceptor in catalysis. Substrate is bound by residues W91, R93, R210, and 216 to 218 (RTS). E229 lines the Mg(2+) pocket.

Belongs to the UPP synthase family. In terms of assembly, homodimer. The cofactor is Mg(2+).

Catalyzes the condensation of isopentenyl diphosphate (IPP) with allylic pyrophosphates generating different type of terpenoids. This chain is Isoprenyl transferase 1, found in Streptomyces coelicolor (strain ATCC BAA-471 / A3(2) / M145).